Consider the following 24-residue polypeptide: Lectin (24 aa).

Belongs to the leguminous lectin family. Homotetramer.

Functionally, agglutinates erythrocytes of blood group A. Binds in decreasing order of affinity: N-acetyl-D-galactosamine, D-galactose, and D-galactosamine. The chain is Lectin from Crotalaria pallida (Smooth rattlebox).